We begin with the raw amino-acid sequence, 525 residues long: Erythropoietin receptor (525 aa).

An N-terminal signal peptide occupies residues 1 to 32; it reads MGAPSSLLFSTAHWRTVPFLLAFWVLLSTGTA. The Extracellular segment spans residues 33-249; that stretch reads EDPTMTPEFL…TIATIIDLRL (217 aa). Cys-58 and Cys-68 are disulfide-bonded. N-linked (GlcNAc...) asparagine glycosylation is found at Asn-77, Asn-100, Asn-149, and Asn-185. Cysteines 91 and 107 form a disulfide. One can recognise a Fibronectin type-III domain in the interval 146-246; it reads PPLNVTVKEK…APITIATIID (101 aa). The WSXWS motif motif lies at 232-236; sequence WSDWT. Residues 250 to 270 form a helical membrane-spanning segment; it reads LLLLSIAIFVALIAGVGVYIF. Residues 271 to 525 lie on the Cytoplasmic side of the membrane; sequence MRHGMYLKHK…NFLAPIYSQS (255 aa). The short motif at 281–289 is the Box 1 motif element; the sequence is VWPQVPTPE. Disordered regions lie at residues 434 to 459 and 492 to 513; these read APRMEHERHRVSRENSVSSDGKQSIP and LDMSSSGEHSPPPSPNFYQNSP. Positions 447–459 are enriched in polar residues; that stretch reads ENSVSSDGKQSIP. The short motif at 487 to 492 is the ITIM motif element; sequence LKYAYL.

Belongs to the type I cytokine receptor family. Type 1 subfamily. Expressed in the ventral blood island from stage 28 through to stage 36. Expressed in the circulating blood by stage 40. In the adult, highly expressed in peripheral blood cells including immature erythrocytes and basophils, and moderately expressed in the hematopoietic organs: liver, kidney and spleen. Expressed at a low level in adult brain.

The protein localises to the cell membrane. Its function is as follows. Receptor for erythropoietin. Mediates erythropoietin-induced erythroblast proliferation and differentiation. The polypeptide is Erythropoietin receptor (Xenopus laevis (African clawed frog)).